We begin with the raw amino-acid sequence, 163 residues long: Small ribosomal subunit protein bS6 (163 aa).

Residues 97–163 (EEGQTAMLTN…GRNEGEGDRA (67 aa)) are disordered. Basic and acidic residues predominate over residues 122-163 (RGPRRDFGDRGPRRDFGDRGPRRDGDGPRAEGGRNEGEGDRA).

This sequence belongs to the bacterial ribosomal protein bS6 family.

In terms of biological role, binds together with bS18 to 16S ribosomal RNA. In Rhodospirillum centenum (strain ATCC 51521 / SW), this protein is Small ribosomal subunit protein bS6.